Reading from the N-terminus, the 250-residue chain is UPF0193 protein EVG1 homolog (250 aa).

Positions 86–110 (ESLRNGEPLPLPEPPRPNTNNDPDK) are disordered.

The protein belongs to the UPF0193 (EVG1) family.

In Drosophila melanogaster (Fruit fly), this protein is UPF0193 protein EVG1 homolog.